An 864-amino-acid polypeptide reads, in one-letter code: Leucine--tRNA ligase (864 aa).

The short motif at 42–52 is the 'HIGH' region element; that stretch reads PYPSGKLHMGH. Residues 624 to 628 carry the 'KMSKS' region motif; the sequence is KMSKS. Residue lysine 627 coordinates ATP.

The protein belongs to the class-I aminoacyl-tRNA synthetase family.

The protein resides in the cytoplasm. The catalysed reaction is tRNA(Leu) + L-leucine + ATP = L-leucyl-tRNA(Leu) + AMP + diphosphate. The polypeptide is Leucine--tRNA ligase (Burkholderia cenocepacia (strain HI2424)).